Reading from the N-terminus, the 482-residue chain is Probable glycine dehydrogenase (decarboxylating) subunit 2 (482 aa).

Lys264 is modified (N6-(pyridoxal phosphate)lysine).

It belongs to the GcvP family. C-terminal subunit subfamily. In terms of assembly, the glycine cleavage system is composed of four proteins: P, T, L and H. In this organism, the P 'protein' is a heterodimer of two subunits. Pyridoxal 5'-phosphate serves as cofactor.

It catalyses the reaction N(6)-[(R)-lipoyl]-L-lysyl-[glycine-cleavage complex H protein] + glycine + H(+) = N(6)-[(R)-S(8)-aminomethyldihydrolipoyl]-L-lysyl-[glycine-cleavage complex H protein] + CO2. In terms of biological role, the glycine cleavage system catalyzes the degradation of glycine. The P protein binds the alpha-amino group of glycine through its pyridoxal phosphate cofactor; CO(2) is released and the remaining methylamine moiety is then transferred to the lipoamide cofactor of the H protein. This Treponema denticola (strain ATCC 35405 / DSM 14222 / CIP 103919 / JCM 8153 / KCTC 15104) protein is Probable glycine dehydrogenase (decarboxylating) subunit 2.